Here is a 147-residue protein sequence, read N- to C-terminus: UPF0178 protein IL2341 (147 aa).

Belongs to the UPF0178 family.

This Idiomarina loihiensis (strain ATCC BAA-735 / DSM 15497 / L2-TR) protein is UPF0178 protein IL2341.